The chain runs to 559 residues: NXPE family member 3 (559 aa).

The first 30 residues, 1-30 (MWINFVKLRLFCCLLAVLMVVVLVVNVTQV), serve as a signal peptide directing secretion. Asn26, Asn237, and Asn346 each carry an N-linked (GlcNAc...) asparagine glycan.

This sequence belongs to the NXPE family.

It localises to the secreted. In Bos taurus (Bovine), this protein is NXPE family member 3 (NXPE3).